A 404-amino-acid chain; its full sequence is Dihydrolipoyllysine-residue acetyltransferase component of pyruvate dehydrogenase complex (404 aa).

Residues 2-78 form the Lipoyl-binding domain; sequence PIKILMPALS…PVNSLIAVLS (77 aa). Lys43 is subject to N6-lipoyllysine. The Peripheral subunit-binding (PSBD) domain occupies 128 to 165; sequence FASPLAKRLAKIRNIRLESVQGSGPHGRIVKQDILSYS. Residue His377 is part of the active site.

Belongs to the 2-oxoacid dehydrogenase family. Forms a 24-polypeptide structural core with octahedral symmetry. Requires (R)-lipoate as cofactor.

The enzyme catalyses N(6)-[(R)-dihydrolipoyl]-L-lysyl-[protein] + acetyl-CoA = N(6)-[(R)-S(8)-acetyldihydrolipoyl]-L-lysyl-[protein] + CoA. In terms of biological role, the pyruvate dehydrogenase complex catalyzes the overall conversion of pyruvate to acetyl-CoA and CO(2). It contains multiple copies of three enzymatic components: pyruvate dehydrogenase (E1), dihydrolipoamide acetyltransferase (E2) and lipoamide dehydrogenase (E3). The sequence is that of Dihydrolipoyllysine-residue acetyltransferase component of pyruvate dehydrogenase complex (pdhC) from Rickettsia typhi (strain ATCC VR-144 / Wilmington).